The chain runs to 188 residues: dCTP deaminase (188 aa).

Residues 111–116 (KSTYAR), 135–137 (TLE), glutamine 156, tyrosine 170, lysine 179, and glutamine 180 contribute to the dCTP site. The active-site Proton donor/acceptor is glutamate 137.

The protein belongs to the dCTP deaminase family. Homotrimer.

The catalysed reaction is dCTP + H2O + H(+) = dUTP + NH4(+). It participates in pyrimidine metabolism; dUMP biosynthesis; dUMP from dCTP (dUTP route): step 1/2. Catalyzes the deamination of dCTP to dUTP. The protein is dCTP deaminase of Rickettsia akari (strain Hartford).